A 500-amino-acid polypeptide reads, in one-letter code: Lysine--tRNA ligase (500 aa).

Glutamate 410 and glutamate 417 together coordinate Mg(2+).

It belongs to the class-II aminoacyl-tRNA synthetase family. In terms of assembly, homodimer. Mg(2+) is required as a cofactor.

The protein localises to the cytoplasm. It carries out the reaction tRNA(Lys) + L-lysine + ATP = L-lysyl-tRNA(Lys) + AMP + diphosphate. The polypeptide is Lysine--tRNA ligase (Pseudomonas putida (strain ATCC 700007 / DSM 6899 / JCM 31910 / BCRC 17059 / LMG 24140 / F1)).